A 225-amino-acid polypeptide reads, in one-letter code: GrpE protein homolog 2, mitochondrial (225 aa).

The N-terminal 32 residues, 1–32 (MAVRSLWACRLRVQRLLAWSAAWESKGWPLPF), are a transit peptide targeting the mitochondrion. Position 142 is an N6-acetyllysine (lysine 142).

The protein belongs to the GrpE family. In terms of assembly, probable component of the PAM complex at least composed of a mitochondrial HSP70 protein, GRPEL1 or GRPEL2, TIMM44, TIMM16/PAM16 and TIMM14/DNAJC19.

The protein localises to the mitochondrion matrix. Functionally, essential component of the PAM complex, a complex required for the translocation of transit peptide-containing proteins from the inner membrane into the mitochondrial matrix in an ATP-dependent manner. Seems to control the nucleotide-dependent binding of mitochondrial HSP70 to substrate proteins. Stimulates ATPase activity of mt-HSP70. May also serve to modulate the interconversion of oligomeric (inactive) and monomeric (active) forms of mt-HSP70. The protein is GrpE protein homolog 2, mitochondrial (GRPEL2) of Pongo abelii (Sumatran orangutan).